The sequence spans 278 residues: Large ribosomal subunit protein uL2 (278 aa).

Residues 218 to 278 form a disordered region; the sequence is RPHNRGVVMN…IMRSRHQRKK (61 aa).

It belongs to the universal ribosomal protein uL2 family. In terms of assembly, part of the 50S ribosomal subunit. Forms a bridge to the 30S subunit in the 70S ribosome.

In terms of biological role, one of the primary rRNA binding proteins. Required for association of the 30S and 50S subunits to form the 70S ribosome, for tRNA binding and peptide bond formation. It has been suggested to have peptidyltransferase activity; this is somewhat controversial. Makes several contacts with the 16S rRNA in the 70S ribosome. This chain is Large ribosomal subunit protein uL2, found in Rhizobium etli (strain ATCC 51251 / DSM 11541 / JCM 21823 / NBRC 15573 / CFN 42).